Here is a 321-residue protein sequence, read N- to C-terminus: Transcription factor MYB60 (321 aa).

HTH myb-type domains follow at residues 9–65 and 66–116; these read KVGI…RPGI and KRGN…KKKI. 2 consecutive DNA-binding regions (H-T-H motif) follow at residues 37–61 and 89–112; these read WRSV…TNYL and WAAI…NTHL. S-nitrosocysteine occurs at positions 49 and 53. Disordered stretches follow at residues 196–215 and 263–291; these read SPKA…EGSI and HHQT…QKKH. The span at 206 to 215 shows a compositional bias: polar residues; the sequence is QNSSLEEGSI. Positions 273-290 are enriched in basic and acidic residues; sequence SDDHDHDHEMKMDHDQKK.

As to expression, restricted to stomatal guard cells. Mostly expressed in leaves, cotyledons, hypocotyls, seeds and ripened berry skins.

The protein localises to the nucleus. In terms of biological role, transcription factor involved in the regulation of gene (e.g. drought-regulated and flavonoid biosynthetic genes) expression and stomatal movements leading to negative regulation of responses to drought and responses to other physiological stimuli (e.g. light). The polypeptide is Transcription factor MYB60 (Vitis vinifera (Grape)).